We begin with the raw amino-acid sequence, 490 residues long: UDP-N-acetylmuramate--L-alanine ligase (490 aa).

122-128 (GTHGKTS) serves as a coordination point for ATP.

The protein belongs to the MurCDEF family.

It is found in the cytoplasm. The catalysed reaction is UDP-N-acetyl-alpha-D-muramate + L-alanine + ATP = UDP-N-acetyl-alpha-D-muramoyl-L-alanine + ADP + phosphate + H(+). The protein operates within cell wall biogenesis; peptidoglycan biosynthesis. Its function is as follows. Cell wall formation. In Mycobacteroides abscessus (strain ATCC 19977 / DSM 44196 / CCUG 20993 / CIP 104536 / JCM 13569 / NCTC 13031 / TMC 1543 / L948) (Mycobacterium abscessus), this protein is UDP-N-acetylmuramate--L-alanine ligase.